The chain runs to 174 residues: Small hydrophobic protein (174 aa).

The helical transmembrane segment at 33-53 threads the bilayer; the sequence is VAVICAILALIFLVATIGLSV. Asn165 carries an N-linked (GlcNAc...) asparagine; by host glycan.

The protein resides in the membrane. This is Small hydrophobic protein (SH) from Meleagris gallopavo (Wild turkey).